A 157-amino-acid polypeptide reads, in one-letter code: Transcription elongation factor GreA (157 aa).

A coiled-coil region spans residues 47-75 (SGEYEDAKKAQALLEGRIRELKHLLSRAE).

The protein belongs to the GreA/GreB family.

Functionally, necessary for efficient RNA polymerase transcription elongation past template-encoded arresting sites. The arresting sites in DNA have the property of trapping a certain fraction of elongating RNA polymerases that pass through, resulting in locked ternary complexes. Cleavage of the nascent transcript by cleavage factors such as GreA or GreB allows the resumption of elongation from the new 3'terminus. GreA releases sequences of 2 to 3 nucleotides. The protein is Transcription elongation factor GreA of Chloroflexus aggregans (strain MD-66 / DSM 9485).